The primary structure comprises 331 residues: N-acetyl-alpha-D-glucosaminyl-diphospho-ditrans,octacis-undecaprenol 4-epimerase (331 aa).

NAD(+) contacts are provided by residues Phe13–Val14, Gln34–Tyr39, Asp47–Val48, Ser109, Tyr132, and Lys136. Substrate is bound by residues Ser109 and Tyr132. Residue Tyr132 is the Proton acceptor of the active site. Substrate-binding positions include Gly183 to Lys184 and Tyr199 to Gly201.

It belongs to the NAD(P)-dependent epimerase/dehydratase family. NAD(+) is required as a cofactor.

The protein resides in the cell membrane. It carries out the reaction N-acetyl-alpha-D-glucosaminyl-di-trans,octa-cis-undecaprenyl diphosphate = N-acetyl-alpha-D-galactosaminyl-di-trans,octa-cis-undecaprenyl diphosphate. Its pathway is bacterial outer membrane biogenesis; LPS O-antigen biosynthesis. Involved in biosynthesis of the repeating tetrasaccharide unit of the O-antigen. Catalyzes the reversible epimerization of the hydroxyl group at position C4 of undecaprenyl pyrophosphate-N-acetylglucosamine (UndPP-GlcNAc) to yield undecaprenyl pyrophosphate-N-acetylgalactosamine (UndPP-GalNAc). The chain is N-acetyl-alpha-D-glucosaminyl-diphospho-ditrans,octacis-undecaprenol 4-epimerase from Escherichia coli O157:H7.